Reading from the N-terminus, the 858-residue chain is DNA mismatch repair protein MutS (858 aa).

Residue 613-620 participates in ATP binding; it reads GPNMAGKS.

The protein belongs to the DNA mismatch repair MutS family.

Functionally, this protein is involved in the repair of mismatches in DNA. It is possible that it carries out the mismatch recognition step. This protein has a weak ATPase activity. The chain is DNA mismatch repair protein MutS from Dehalococcoides mccartyi (strain ATCC BAA-2266 / KCTC 15142 / 195) (Dehalococcoides ethenogenes (strain 195)).